Reading from the N-terminus, the 547-residue chain is MARYIFITGGVVSSLGKGLASAALGALLQARGFTVRLRKLDPYLNVDPGTMSPFEHGEVFVTDDGAETDLDLGHYERFTGVSARKTDSVSSGRIYSNVLEKERRGAYLGKTIQVIPHVTNEIKDFLAVGEDEVDFMLCEIGGTVGDIEGLPFFEAIRQFAQERARSQCIFVHLTLLPWLAASGELKTKPTQHSVKELRSIGIAPDVLVCRSEHPIPEKERAKIALFCNVRPDAVIPAYDLKTIYEAPLAYHRAGLDQAVLDAFQISPAPRPDLTRWEDVMDRLENAEGQVRIAVVGKYTQLEDAYKSIAEALTHGGMANRVRVRADWVDSEKLEGEGAHLLDGYNGIIVPGGFGERGTEGMIAAAKYAREKKVPYLGICLGMQMAVIEGARNLAGMPDAGSEEFDHEAGKTRFTPVVYHLKEWVQGNYTVQRKLTDDKGGTMRLGAYTAVLVPGSKISEIYDGALEIEDRHRHRYEVDAKYRDQLEAAGLSFSGMSPDGRLPEVVEYRDHPWFIGVQSHPELKSKPFQPAPLFAGFIRAAMDNERLV.

The amidoligase domain stretch occupies residues 1 to 265 (MARYIFITGG…DQAVLDAFQI (265 aa)). Serine 13 serves as a coordination point for CTP. Residue serine 13 coordinates UTP. ATP contacts are provided by residues 14–19 (SLGKGL) and aspartate 71. Mg(2+)-binding residues include aspartate 71 and glutamate 139. Residues 146–148 (DIE), 186–191 (KTKPTQ), and lysine 222 each bind CTP. UTP contacts are provided by residues 186–191 (KTKPTQ) and lysine 222. Residues 291–546 (RIAVVGKYTQ…IRAAMDNERL (256 aa)) form the Glutamine amidotransferase type-1 domain. Glycine 352 provides a ligand contact to L-glutamine. The active-site Nucleophile; for glutamine hydrolysis is cysteine 379. L-glutamine-binding positions include 380-383 (LGMQ), glutamate 403, and arginine 474. Catalysis depends on residues histidine 519 and glutamate 521.

This sequence belongs to the CTP synthase family. In terms of assembly, homotetramer.

The catalysed reaction is UTP + L-glutamine + ATP + H2O = CTP + L-glutamate + ADP + phosphate + 2 H(+). It catalyses the reaction L-glutamine + H2O = L-glutamate + NH4(+). The enzyme catalyses UTP + NH4(+) + ATP = CTP + ADP + phosphate + 2 H(+). It functions in the pathway pyrimidine metabolism; CTP biosynthesis via de novo pathway; CTP from UDP: step 2/2. Allosterically activated by GTP, when glutamine is the substrate; GTP has no effect on the reaction when ammonia is the substrate. The allosteric effector GTP functions by stabilizing the protein conformation that binds the tetrahedral intermediate(s) formed during glutamine hydrolysis. Inhibited by the product CTP, via allosteric rather than competitive inhibition. Catalyzes the ATP-dependent amination of UTP to CTP with either L-glutamine or ammonia as the source of nitrogen. Regulates intracellular CTP levels through interactions with the four ribonucleotide triphosphates. The protein is CTP synthase of Paracoccus denitrificans (strain Pd 1222).